The chain runs to 288 residues: ATP synthase gamma chain (288 aa).

Belongs to the ATPase gamma chain family. F-type ATPases have 2 components, CF(1) - the catalytic core - and CF(0) - the membrane proton channel. CF(1) has five subunits: alpha(3), beta(3), gamma(1), delta(1), epsilon(1). CF(0) has three main subunits: a, b and c.

It localises to the cell membrane. Produces ATP from ADP in the presence of a proton gradient across the membrane. The gamma chain is believed to be important in regulating ATPase activity and the flow of protons through the CF(0) complex. The sequence is that of ATP synthase gamma chain from Macrococcus caseolyticus (strain JCSC5402) (Macrococcoides caseolyticum).